The sequence spans 1010 residues: Importin-8 (1010 aa).

Positions 22 to 102 constitute an Importin N-terminal domain; the sequence is AETELNQSYK…RDNIVEGIIR (81 aa). Basic and acidic residues predominate over residues 886 to 895; the sequence is NHSKAEKVDI. Residues 886 to 932 form a disordered region; the sequence is NHSKAEKVDIEENEEISSEEEEETSVSAQAMQSQIGRSEEEDDDDWD. Over residues 896–909 the composition is skewed to acidic residues; sequence EENEEISSEEEEET. Phosphoserine occurs at positions 902 and 903. Residues 910–921 are compositionally biased toward polar residues; that stretch reads SVSAQAMQSQIG.

The protein belongs to the importin beta family. In terms of assembly, forms a heterodimer with KPNB1. Interacts with SRP19. Interacts with RPL23A. Binds directly to nuclear pore complexes. Interacts with LRPPRC; the interaction occurs when LRPPRC is in its RNA-free form and promotes import of LRPPRC to the nucleus to allow for EIF4E-mediated export of mRNAS from the nucleus to the cytoplasm.

It localises to the cytoplasm. It is found in the nucleus. Functionally, involved in nuclear protein import, either by acting as autonomous nuclear transport receptor or as an adapter-like protein in association with the importin-beta subunit KPNB1. Acting autonomously, may serve as receptor for nuclear localization signals (NLS) and promote translocation of import substrates through the nuclear pore complex (NPC) by an energy requiring, Ran-dependent mechanism. At the nucleoplasmic side of the NPC, Ran binds to importin, the importin/substrate complex dissociates and importin is re-exported from the nucleus to the cytoplasm where GTP hydrolysis releases Ran. The directionality of nuclear import is thought to be conferred by an asymmetric distribution of the GTP- and GDP-bound forms of Ran between the cytoplasm and nucleus. In vitro mediates the nuclear import of the signal recognition particle protein SRP19. May also be involved in cytoplasm-to-nucleus shuttling of a broad spectrum of other cargos, including Argonaute-microRNAs complexes, the JUN protein, RELA/NF-kappa-B p65 subunit, the translation initiation factor EIF4E and a set of receptor-activated mothers against decapentaplegic homolog (SMAD) transcription factors that play a critical role downstream of the large family of transforming growth factor beta and bone morphogenetic protein (BMP) cytokines. The polypeptide is Importin-8 (Mus musculus (Mouse)).